We begin with the raw amino-acid sequence, 147 residues long: uncharacterized protein (147 aa).

Residues 2-63 enclose the HTH asnC-type domain; the sequence is LDELDKKIIG…KLNYENIGYD (62 aa). A DNA-binding region (H-T-H motif) is located at residues 21–40; sequence YREIAKELNVAVGTIYNRIK.

This is an uncharacterized protein from Pyrococcus abyssi (strain GE5 / Orsay).